The following is a 318-amino-acid chain: NADH-quinone oxidoreductase subunit H 2 (318 aa).

9 helical membrane-spanning segments follow: residues 4–24, 77–97, 106–126, 146–166, 179–199, 214–234, 238–258, 262–282, and 293–313; these read LLIA…AGVF, LAPA…AFAP, VGVL…VLGA, LAYE…AGSF, LWFI…GLAA, LVAG…FLGE, ILLV…GPIL, VWFG…RAAL, and FAWK…AWIA.

The protein belongs to the complex I subunit 1 family. NDH-1 is composed of 14 different subunits. Subunits NuoA, H, J, K, L, M, N constitute the membrane sector of the complex.

It localises to the cell inner membrane. The enzyme catalyses a quinone + NADH + 5 H(+)(in) = a quinol + NAD(+) + 4 H(+)(out). Functionally, NDH-1 shuttles electrons from NADH, via FMN and iron-sulfur (Fe-S) centers, to quinones in the respiratory chain. The immediate electron acceptor for the enzyme in this species is believed to be ubiquinone. Couples the redox reaction to proton translocation (for every two electrons transferred, four hydrogen ions are translocated across the cytoplasmic membrane), and thus conserves the redox energy in a proton gradient. This subunit may bind ubiquinone. The polypeptide is NADH-quinone oxidoreductase subunit H 2 (Cereibacter sphaeroides (strain ATCC 17029 / ATH 2.4.9) (Rhodobacter sphaeroides)).